A 343-amino-acid chain; its full sequence is S-adenosylmethionine:tRNA ribosyltransferase-isomerase (343 aa).

It belongs to the QueA family. Monomer.

It is found in the cytoplasm. It carries out the reaction 7-aminomethyl-7-carbaguanosine(34) in tRNA + S-adenosyl-L-methionine = epoxyqueuosine(34) in tRNA + adenine + L-methionine + 2 H(+). The protein operates within tRNA modification; tRNA-queuosine biosynthesis. Its function is as follows. Transfers and isomerizes the ribose moiety from AdoMet to the 7-aminomethyl group of 7-deazaguanine (preQ1-tRNA) to give epoxyqueuosine (oQ-tRNA). This Enterococcus faecalis (strain ATCC 700802 / V583) protein is S-adenosylmethionine:tRNA ribosyltransferase-isomerase.